A 376-amino-acid polypeptide reads, in one-letter code: Flap endonuclease 1 (376 aa).

The N-domain stretch occupies residues 1 to 105; the sequence is MGIKGLSKLL…GELHKRKENA (105 aa). Aspartate 34 is a Mg(2+) binding site. The DNA site is built by arginine 47 and arginine 71. Residues aspartate 87, glutamate 159, glutamate 161, aspartate 180, and aspartate 182 each coordinate Mg(2+). Positions 123–254 are I-domain; sequence QAKKLMKRTA…ITAFELIQQY (132 aa). Glutamate 159 is a DNA binding site. DNA is bound by residues glycine 232 and aspartate 234. Aspartate 234 contacts Mg(2+). An interaction with PCNA region spans residues 336–344; sequence AQGRLDSFF. The disordered stretch occupies residues 354 to 376; it reads SEAASGVKRKKPTTKAKESRKKK. A compositionally biased stretch (basic residues) spans 360–376; that stretch reads VKRKKPTTKAKESRKKK.

This sequence belongs to the XPG/RAD2 endonuclease family. FEN1 subfamily. In terms of assembly, interacts with PCNA. Three molecules of FEN1 bind to one PCNA trimer with each molecule binding to one PCNA monomer. PCNA stimulates the nuclease activity without altering cleavage specificity. It depends on Mg(2+) as a cofactor. In terms of processing, phosphorylated. Phosphorylation upon DNA damage induces relocalization to the nuclear plasma.

It localises to the nucleus. The protein resides in the nucleolus. The protein localises to the nucleoplasm. It is found in the mitochondrion. Structure-specific nuclease with 5'-flap endonuclease and 5'-3' exonuclease activities involved in DNA replication and repair. During DNA replication, cleaves the 5'-overhanging flap structure that is generated by displacement synthesis when DNA polymerase encounters the 5'-end of a downstream Okazaki fragment. It enters the flap from the 5'-end and then tracks to cleave the flap base, leaving a nick for ligation. Also involved in the long patch base excision repair (LP-BER) pathway, by cleaving within the apurinic/apyrimidinic (AP) site-terminated flap. Acts as a genome stabilization factor that prevents flaps from equilibrating into structures that lead to duplications and deletions. Also possesses 5'-3' exonuclease activity on nicked or gapped double-stranded DNA, and exhibits RNase H activity. Also involved in replication and repair of rDNA and in repairing mitochondrial DNA. The polypeptide is Flap endonuclease 1 (Entamoeba histolytica (strain ATCC 30459 / HM-1:IMSS / ABRM)).